Consider the following 358-residue polypeptide: Photosystem II protein D1 (358 aa).

3 helical membrane-spanning segments follow: residues 29–46 (YVGW…AATI), 116–131 (HFLI…QWEL), and 140–154 (WICV…AATS). His116 contacts chlorophyll a. Position 124 (Trp124) interacts with pheophytin a. [CaMn4O5] cluster-binding residues include Asp168 and Glu187. The chain crosses the membrane as a helical span at residues 195-216 (FHQLGVAGVFGGSLFCAMHGSL). His196 lines the chlorophyll a pocket. A quinone contacts are provided by residues His213 and 262 to 263 (SF). His213 serves as a coordination point for Fe cation. His270 contacts Fe cation. The chain crosses the membrane as a helical span at residues 272 to 286 (FLAAWPVVCIWFTAL). 4 residues coordinate [CaMn4O5] cluster: His330, Glu331, Asp340, and Ala342. Residues 343–358 (AGEVLPIALQSPAING) constitute a propeptide that is removed on maturation.

It belongs to the reaction center PufL/M/PsbA/D family. As to quaternary structure, PSII is composed of 1 copy each of membrane proteins PsbA, PsbB, PsbC, PsbD, PsbE, PsbF, PsbH, PsbI, PsbJ, PsbK, PsbL, PsbM, PsbT, PsbX, PsbY, PsbZ, Psb30/Ycf12, peripheral proteins PsbO, CyanoQ (PsbQ), PsbU, PsbV and a large number of cofactors. It forms dimeric complexes. Requires The D1/D2 heterodimer binds P680, chlorophylls that are the primary electron donor of PSII, and subsequent electron acceptors. It shares a non-heme iron and each subunit binds pheophytin, quinone, additional chlorophylls, carotenoids and lipids. D1 provides most of the ligands for the Mn4-Ca-O5 cluster of the oxygen-evolving complex (OEC). There is also a Cl(-1) ion associated with D1 and D2, which is required for oxygen evolution. The PSII complex binds additional chlorophylls, carotenoids and specific lipids. as cofactor. In terms of processing, tyr-159 forms a radical intermediate that is referred to as redox-active TyrZ, YZ or Y-Z. C-terminally processed by CtpA; processing is essential to allow assembly of the oxygen-evolving complex and thus photosynthetic growth.

It localises to the cellular thylakoid membrane. It catalyses the reaction 2 a plastoquinone + 4 hnu + 2 H2O = 2 a plastoquinol + O2. Its function is as follows. Photosystem II (PSII) is a light-driven water:plastoquinone oxidoreductase that uses light energy to abstract electrons from H(2)O, generating O(2) and a proton gradient subsequently used for ATP formation. It consists of a core antenna complex that captures photons, and an electron transfer chain that converts photonic excitation into a charge separation. The D1/D2 (PsbA/PsbD) reaction center heterodimer binds P680, the primary electron donor of PSII as well as several subsequent electron acceptors. In Mastigocladus laminosus (Fischerella sp.), this protein is Photosystem II protein D1.